The following is a 280-amino-acid chain: Shikimate dehydrogenase (NADP(+)) (280 aa).

Residues 20-22 (SRS) and Thr-67 contribute to the shikimate site. Catalysis depends on Lys-71, which acts as the Proton acceptor. Asp-82 contacts NADP(+). 2 residues coordinate shikimate: Asn-91 and Asp-106. Residues 131-135 (GAGGS) and Leu-220 each bind NADP(+). Tyr-222 provides a ligand contact to shikimate. Gly-243 contributes to the NADP(+) binding site.

It belongs to the shikimate dehydrogenase family. Homodimer.

The enzyme catalyses shikimate + NADP(+) = 3-dehydroshikimate + NADPH + H(+). It functions in the pathway metabolic intermediate biosynthesis; chorismate biosynthesis; chorismate from D-erythrose 4-phosphate and phosphoenolpyruvate: step 4/7. Involved in the biosynthesis of the chorismate, which leads to the biosynthesis of aromatic amino acids. Catalyzes the reversible NADPH linked reduction of 3-dehydroshikimate (DHSA) to yield shikimate (SA). In Rhodopseudomonas palustris (strain HaA2), this protein is Shikimate dehydrogenase (NADP(+)).